The chain runs to 162 residues: uncharacterized protein (162 aa).

Positions 1–24 (MCKRFKFLLAVSALFISITVVLAG) are cleaved as a signal peptide. The N-palmitoyl cysteine moiety is linked to residue cysteine 25. Cysteine 25 carries the S-diacylglycerol cysteine lipid modification.

Its subcellular location is the cell membrane. This is an uncharacterized protein from Bacillus anthracis.